A 518-amino-acid chain; its full sequence is 12S seed storage globulin 1 (518 aa).

The N-terminal stretch at 1 to 24 (MATTRFPSLLFYSCIFLLCNGSMA) is a signal peptide. 2 cysteine pairs are disulfide-bonded: Cys-45-Cys-78 and Cys-121-Cys-324. The region spanning 50–240 (LQAFEPLRQV…ALGISQQAAQ (191 aa)) is the Cupin type-1 1 domain. The span at 281 to 295 (QSQQEQSTQYQVGQS) shows a compositional bias: low complexity. The segment at 281 to 311 (QSQQEQSTQYQVGQSPQYQEGQSTQYQSGQS) is disordered. The segment covering 296–311 (PQYQEGQSTQYQSGQS) has biased composition (polar residues). The region spanning 330–479 (QNIENPKRAD…AYRISRQESQ (150 aa)) is the Cupin type-1 2 domain. Residues 496 to 518 (FAQTGSQSYQDEGESSSTEKASE) form a disordered region.

It belongs to the 11S seed storage protein (globulins) family. As to quaternary structure, hexamer; each subunit is composed of an acidic and a basic chain derived from a single precursor and linked by a disulfide bond.

Its function is as follows. This is a seed storage protein. This chain is 12S seed storage globulin 1, found in Avena sativa (Oat).